We begin with the raw amino-acid sequence, 226 residues long: Large ribosomal subunit protein uL3 (226 aa).

The span at 135 to 150 (MSSQRASHGNSRSHNV) shows a compositional bias: polar residues. Residues 135–158 (MSSQRASHGNSRSHNVPGSIGMAQ) are disordered. Q158 carries the N5-methylglutamine modification.

Belongs to the universal ribosomal protein uL3 family. As to quaternary structure, part of the 50S ribosomal subunit. Forms a cluster with proteins L14 and L19. In terms of processing, methylated by PrmB.

Functionally, one of the primary rRNA binding proteins, it binds directly near the 3'-end of the 23S rRNA, where it nucleates assembly of the 50S subunit. This Variovorax paradoxus (strain S110) protein is Large ribosomal subunit protein uL3.